The primary structure comprises 248 residues: Probable transcriptional regulatory protein RPC_4807 (248 aa).

The interval 1–21 (MAGHSQFKNIMHRKGRQDAQK) is disordered.

The protein belongs to the TACO1 family.

Its subcellular location is the cytoplasm. This is Probable transcriptional regulatory protein RPC_4807 from Rhodopseudomonas palustris (strain BisB18).